Consider the following 251-residue polypeptide: V-set and transmembrane domain-containing protein 2B (251 aa).

The N-terminal stretch at 1–25 (MEKQGLFSALCYLMLNTPLLFSVNA) is a signal peptide. The Ig-like V-type domain maps to 26–142 (TFTEVPKDVT…DETQEHKAQA (117 aa)). The Extracellular portion of the chain corresponds to 26 to 226 (TFTEVPKDVT…RQQHGSGTGP (201 aa)). Cysteines 46 and 125 form a disulfide. A disordered region spans residues 157–213 (AAEAVSHIQSSGPRRNNPSSRATPEPGNKRAVPPAENLAPSLSTAASSSASPAPGKA). Composition is skewed to low complexity over residues 166–177 (SSGPRRNNPSSR) and 195–213 (APSL…PGKA). A helical transmembrane segment spans residues 227–247 (IFANDPALYMFLLIFHQLVYL). At 248–251 (LLNH) the chain is on the cytoplasmic side.

The protein resides in the membrane. In Xenopus tropicalis (Western clawed frog), this protein is V-set and transmembrane domain-containing protein 2B (vstm2b).